Reading from the N-terminus, the 629-residue chain is Methyl-accepting chemotaxis protein PscA (629 aa).

Topologically, residues 1 to 9 (MKNLGFSKK) are cytoplasmic. The chain crosses the membrane as a helical span at residues 10–30 (ILLAAALIVVVAFSVFIVIND). The Periplasmic segment spans residues 31–276 (YRQRQSLKSS…AYAMLTEFRT (246 aa)). The region spanning 36 to 258 (SLKSSVKSEL…QGVATANWYV (223 aa)) is the Cache domain. Residues 277-297 (SAITAMVVVVMVIILLLGPLI) traverse the membrane as a helical segment. The region spanning 298–352 (RVLMQPLHQMGRAMRDIADGEGDLTKRLAITSHDEFGALAESFNHFVERIHTSIR) is the HAMP domain. At 298 to 629 (RVLMQPLHQM…LQQLVGSFRI (332 aa)) the chain is on the cytoplasmic side. Residues 357–593 (TAAQLGEVAT…SINVDITHIN (237 aa)) form the Methyl-accepting transducer domain.

This sequence belongs to the methyl-accepting chemotaxis (MCP) protein family.

It is found in the cell inner membrane. Functionally, chemotactic-signal transducers respond to changes in the concentration of attractants and repellents in the environment, transduce a signal from the outside to the inside of the cell, and facilitate sensory adaptation through the variation of the level of methylation. PscA recognizes specifically and with high affinity L-Asp, D-Asp and L-Glu. It exerts a double function, in mediating chemotaxis to these amino acids and in modulating cyclic di-GMP (c-di-GMP) levels, causing alterations in biofilm development. Plays a key role in the infection process. It may facilitate bacterial entry into the plant. The sequence is that of Methyl-accepting chemotaxis protein PscA from Pseudomonas syringae pv. tomato (strain ATCC BAA-871 / DC3000).